The primary structure comprises 227 residues: PKHD-type hydroxylase Bcen_3557 (227 aa).

One can recognise a Fe2OG dioxygenase domain in the interval 78 to 178; sequence KVFPPLFNRY…RVASFFWIQS (101 aa). Histidine 96, aspartate 98, and histidine 159 together coordinate Fe cation. Position 169 (arginine 169) interacts with 2-oxoglutarate.

Fe(2+) serves as cofactor. Requires L-ascorbate as cofactor.

In Burkholderia orbicola (strain AU 1054), this protein is PKHD-type hydroxylase Bcen_3557.